We begin with the raw amino-acid sequence, 231 residues long: Claudin-10 (231 aa).

The chain crosses the membrane as a helical span at residues 1 to 21 (MASTALEIVAFVVSISGWVLV). The Extracellular portion of the chain corresponds to 22-80 (SSTLPTDYWKVSTIDGTVITTATYFANLWKICVTDSTGVANCKEFPSMLALDGYIQACR). The chain crosses the membrane as a helical span at residues 81-101 (GLMIAAVSLGFFGSIFALFGM). The Cytoplasmic segment spans residues 102 to 115 (KCTKVGGSDQAKAK). A helical transmembrane segment spans residues 116–136 (IACLAGIVFILSGLCSMTGCS). At 137–160 (LYANKITTEFFDPLYMEQKYELGA) the chain is on the extracellular side. Residues 161 to 181 (ALFIGWAGASLCIIGGVIFCF) form a helical membrane-spanning segment. Over 182–231 (SISDNNKTPRMGYTYNGPTSAMSSRTKYQGGEGDFKTTGPSKQFDKNAYV) the chain is Cytoplasmic.

It belongs to the claudin family. As to quaternary structure, can form homodimers both in trans (interaction between CLDN10 molecules in opposing membranes) and in cis (interaction between CLDN10 molecules within one membrane). Interacts with CLDN19. As to expression, widely expressed, with highest expression detected in brain cortex, kidney and lung. In kidney, the expression is highest in medulla, with transcripts being detected in medullary thick ascending limb of Henle's loop (mTAL) and outer and inner medullary collecting ducts. Expressed in salivary glands and skin. In terms of tissue distribution, detected in kidney with transcripts being detected in PCT, mTAL and cortical collecting duct. Detected in uterus. Expressed in proximal tubules (at protein level). Only detected in kidney and uterus. As to expression, detected in kidney with transcripts being detected in PCT, mTAL and cortical collecting duct. Detected in uterus. In terms of tissue distribution, expressed in the inner ear where it is detected in organ of Corti, marginal cells of stria vascularis, Reissner's membrane and spiral limbus (at protein level).

It is found in the cell junction. The protein localises to the tight junction. It localises to the cell membrane. Its subcellular location is the endoplasmic reticulum. It carries out the reaction Na(+)(in) = Na(+)(out). The enzyme catalyses Li(+)(in) = Li(+)(out). It catalyses the reaction K(+)(in) = K(+)(out). The catalysed reaction is Rb(+)(in) = Rb(+)(out). It carries out the reaction Cs(+)(in) = Cs(+)(out). The enzyme catalyses NH4(+)(in) = NH4(+)(out). It catalyses the reaction methylamine(out) = methylamine(in). The catalysed reaction is Mg(2+)(in) = Mg(2+)(out). It carries out the reaction Ca(2+)(in) = Ca(2+)(out). The enzyme catalyses Sr(2+)(in) = Sr(2+)(out). It catalyses the reaction chloride(in) = chloride(out). The catalysed reaction is nitrate(in) = nitrate(out). Its function is as follows. Forms paracellular channels: polymerizes in tight junction strands with cation- and anion-selective channels through the strands, conveying epithelial permeability in a process known as paracellular tight junction permeability. Forms cation-selective paracellular channels. In sweat glands and in the thick ascending limb (TAL) of Henle's loop in kidney, it controls paracellular sodium permeability which is essential for proper sweat production and renal function. In terms of biological role, forms anion-selective paracellular channels. In renal proximal tubules, it conveys selective chloride over hydrogencarbonate anion permeability which is required for renal chloride reabsorption and salt homeostasis. The sequence is that of Claudin-10 from Mus musculus (Mouse).